The following is a 430-amino-acid chain: UDP-N-acetylmuramoylalanine--D-glutamate ligase (430 aa).

109 to 115 (GTDGKST) contacts ATP.

This sequence belongs to the MurCDEF family.

It is found in the cytoplasm. It carries out the reaction UDP-N-acetyl-alpha-D-muramoyl-L-alanine + D-glutamate + ATP = UDP-N-acetyl-alpha-D-muramoyl-L-alanyl-D-glutamate + ADP + phosphate + H(+). The protein operates within cell wall biogenesis; peptidoglycan biosynthesis. Functionally, cell wall formation. Catalyzes the addition of glutamate to the nucleotide precursor UDP-N-acetylmuramoyl-L-alanine (UMA). The sequence is that of UDP-N-acetylmuramoylalanine--D-glutamate ligase from Thermotoga petrophila (strain ATCC BAA-488 / DSM 13995 / JCM 10881 / RKU-1).